A 299-amino-acid chain; its full sequence is ATP phosphoribosyltransferase (299 aa).

Belongs to the ATP phosphoribosyltransferase family. Long subfamily. Equilibrium between an active dimeric form, an inactive hexameric form and higher aggregates. Interconversion between the various forms is largely reversible and is influenced by the natural substrates and inhibitors of the enzyme. The cofactor is Mg(2+).

Its subcellular location is the cytoplasm. It catalyses the reaction 1-(5-phospho-beta-D-ribosyl)-ATP + diphosphate = 5-phospho-alpha-D-ribose 1-diphosphate + ATP. Its pathway is amino-acid biosynthesis; L-histidine biosynthesis; L-histidine from 5-phospho-alpha-D-ribose 1-diphosphate: step 1/9. Its activity is regulated as follows. Feedback inhibited by histidine. Catalyzes the condensation of ATP and 5-phosphoribose 1-diphosphate to form N'-(5'-phosphoribosyl)-ATP (PR-ATP). Has a crucial role in the pathway because the rate of histidine biosynthesis seems to be controlled primarily by regulation of HisG enzymatic activity. In Buchnera aphidicola subsp. Melaphis rhois, this protein is ATP phosphoribosyltransferase.